Consider the following 368-residue polypeptide: MSAQSVEEDSILIIPTPDEEEKILRVKLEEDPDGEEGSSIPWNHLPDPEIFRQRFRQFGYQDSPGPREAVSQLRELCRLWLRPETHTKEQILELVVLEQFVAILPKELQTWVRDHHPENGEEAVTVLEDLESELDDPGQPVSLRRRKREVLVEDMVSQEEAQGLPSSELDAVENQLKWASWELHSLRHCDDDGRTENGALAPKQELPSAVESHEVPGTLNMGVPQIFKYGETCFPKGRFERKRNPSRKKQHICDECGKHFSQGSALILHQRIHSGEKPYGCVECGKAFSRSSILVQHQRVHTGEKPYKCLECGKAFSQNSGLINHQRIHTGEKPYECVQCGKSYSQSSNLFRHXXXHNAXKLLNVVKV.

Lysine 22 is covalently cross-linked (Glycyl lysine isopeptide (Lys-Gly) (interchain with G-Cter in SUMO2)). Residue lysine 27 forms a Glycyl lysine isopeptide (Lys-Gly) (interchain with G-Cter in SUMO1); alternate linkage. Residue lysine 27 forms a Glycyl lysine isopeptide (Lys-Gly) (interchain with G-Cter in SUMO2); alternate linkage. The SCAN box domain occupies 52–134 (RQRFRQFGYQ…TVLEDLESEL (83 aa)). Serine 132 and serine 142 each carry phosphoserine. Glycyl lysine isopeptide (Lys-Gly) (interchain with G-Cter in SUMO2) cross-links involve residues lysine 147, lysine 177, and lysine 236. The segment at 251–273 (HICDECGKHFSQGSALILHQRIH) adopts a C2H2-type 1 zinc-finger fold. Residues 251 to 301 (HICDECGKHFSQGSALILHQRIHSGEKPYGCVECGKAFSRSSILVQHQRVH) are necessary and sufficient for nuclear localization. Serine 274 carries the post-translational modification Phosphoserine. Residues lysine 277 and lysine 286 each participate in a glycyl lysine isopeptide (Lys-Gly) (interchain with G-Cter in SUMO2) cross-link. 3 C2H2-type zinc fingers span residues 279–301 (YGCVECGKAFSRSSILVQHQRVH), 307–329 (YKCLECGKAFSQNSGLINHQRIH), and 335–357 (YECVQCGKSYSQSSNLFRHXXXH). Serine 292 carries the phosphoserine modification. Tyrosine 335 carries the phosphotyrosine modification. Residues lysine 361 and lysine 367 each participate in a glycyl lysine isopeptide (Lys-Gly) (interchain with G-Cter in SUMO2) cross-link.

This sequence belongs to the krueppel C2H2-type zinc-finger protein family. Sumoylated.

Its subcellular location is the nucleus. Transcription factor required for myelination of differentiated oligodendrocytes. Required for the conversion of oligodendrocytes from the premyelinating to the myelinating state. In the developing central nervous system (CNS), involved in the maintenance in the progenitor stage by promoting the cell cycle. Specifically binds to the 5'-TCAT-3' DNA sequence. Has transcription repressor activity in vitro. The sequence is that of Zinc finger protein 24 (ZNF24) from Pan paniscus (Pygmy chimpanzee).